Reading from the N-terminus, the 160-residue chain is Ribosomal RNA large subunit methyltransferase H (160 aa).

Residues Leu76, Gly108, and 127–132 contribute to the S-adenosyl-L-methionine site; that span reads LGKMTW.

This sequence belongs to the RNA methyltransferase RlmH family. In terms of assembly, homodimer.

It is found in the cytoplasm. The enzyme catalyses pseudouridine(1915) in 23S rRNA + S-adenosyl-L-methionine = N(3)-methylpseudouridine(1915) in 23S rRNA + S-adenosyl-L-homocysteine + H(+). Its function is as follows. Specifically methylates the pseudouridine at position 1915 (m3Psi1915) in 23S rRNA. The chain is Ribosomal RNA large subunit methyltransferase H from Rhizobium etli (strain ATCC 51251 / DSM 11541 / JCM 21823 / NBRC 15573 / CFN 42).